Reading from the N-terminus, the 285-residue chain is Bifunctional protein FolD (285 aa).

NADP(+)-binding positions include 166 to 168 (GAS) and isoleucine 232.

Belongs to the tetrahydrofolate dehydrogenase/cyclohydrolase family. As to quaternary structure, homodimer.

It carries out the reaction (6R)-5,10-methylene-5,6,7,8-tetrahydrofolate + NADP(+) = (6R)-5,10-methenyltetrahydrofolate + NADPH. The catalysed reaction is (6R)-5,10-methenyltetrahydrofolate + H2O = (6R)-10-formyltetrahydrofolate + H(+). It participates in one-carbon metabolism; tetrahydrofolate interconversion. Its function is as follows. Catalyzes the oxidation of 5,10-methylenetetrahydrofolate to 5,10-methenyltetrahydrofolate and then the hydrolysis of 5,10-methenyltetrahydrofolate to 10-formyltetrahydrofolate. This chain is Bifunctional protein FolD, found in Actinobacillus succinogenes (strain ATCC 55618 / DSM 22257 / CCUG 43843 / 130Z).